The following is an 862-amino-acid chain: Rab GTPase-binding effector protein 1 (862 aa).

At Ala2 the chain carries N-acetylalanine. Residues 11–345 (DVSLQQRVAE…KKADVEEEIK (335 aa)) adopt a coiled-coil conformation. The residue at position 282 (Lys282) is an N6-acetyllysine. A disordered region spans residues 315–338 (ELKKKDQEDDEQQRLNKRKDHKKA). Ser374, Ser377, and Ser407 each carry phosphoserine. Thr408 bears the Phosphothreonine mark. At Ser410 the chain carries Phosphoserine. Residues 435-447 (DESDFGPLVGADS) form an interaction with AP1G1, AP1G2, GGA1, GGA2 and GGA3 region. A coiled-coil region spans residues 534–816 (DMCSNYEKQL…LQTELDVSEQ (283 aa)).

It belongs to the rabaptin family. Homodimer when bound to RAB5A. Heterodimer with RABGEF1. The heterodimer binds RAB4A and RAB5A that have been activated by GTP-binding. Interacts with TSC2. Interacts with GGA1 (via GAE domain), GGA2 (via GAE domain) and GGA3 (via GAE domain). Interacts with AP1G1 (via GAE domain). Interacts with AP1G2 (via GAE domain). Interacts with ECPAS. Interacts with KCNH1. Interacts with PKD1 (via C-terminal domain) and GGA1; the interactions recruit PKD1:PKD2 complex to GGA1 and ARL3 at trans-Golgi network. Post-translationally, proteolytic cleavage by caspases in apoptotic cells causes loss of endosome fusion activity.

Its subcellular location is the cytoplasm. The protein resides in the early endosome. The protein localises to the recycling endosome. It localises to the cytoplasmic vesicle. Its function is as follows. Rab effector protein acting as linker between gamma-adaptin, RAB4A and RAB5A. Involved in endocytic membrane fusion and membrane trafficking of recycling endosomes. Involved in KCNH1 channels trafficking to and from the cell membrane. Stimulates RABGEF1 mediated nucleotide exchange on RAB5A. Mediates the traffic of PKD1:PKD2 complex from the endoplasmic reticulum through the Golgi to the cilium. The chain is Rab GTPase-binding effector protein 1 (RABEP1) from Homo sapiens (Human).